A 213-amino-acid polypeptide reads, in one-letter code: Probable nicotinate-nucleotide adenylyltransferase (213 aa).

Belongs to the NadD family.

It carries out the reaction nicotinate beta-D-ribonucleotide + ATP + H(+) = deamido-NAD(+) + diphosphate. It functions in the pathway cofactor biosynthesis; NAD(+) biosynthesis; deamido-NAD(+) from nicotinate D-ribonucleotide: step 1/1. Catalyzes the reversible adenylation of nicotinate mononucleotide (NaMN) to nicotinic acid adenine dinucleotide (NaAD). This is Probable nicotinate-nucleotide adenylyltransferase from Salmonella gallinarum (strain 287/91 / NCTC 13346).